The primary structure comprises 840 residues: Heat shock 70 kDa protein 4 (840 aa).

Lys53 is modified (N6-acetyllysine). A Phosphoserine modification is found at Ser76. Phosphotyrosine occurs at positions 89 and 336. Phosphoserine is present on residues Ser393 and Ser415. Lys430 bears the N6-acetyllysine mark. The tract at residues 500–575 (VHKSEESEEP…QAKKAKVKTS (76 aa)) is disordered. Over residues 514–533 (QNAKEEEKMQVDQEEPHTEE) the composition is skewed to basic and acidic residues. A Phosphothreonine modification is found at Thr538. Ser546 bears the Phosphoserine mark. Tyr660 is subject to Phosphotyrosine. A Phosphoserine modification is found at Ser756. N6-methyllysine is present on Lys773. The disordered stretch occupies residues 781 to 840 (PIISKPKPKVEPPKEEPKHAEQNGPVDGQGDNPGTQAAEHGADTAVPSDGDKKLPEMDID). Composition is skewed to basic and acidic residues over residues 788–801 (PKVE…KHAE) and 829–840 (DGDKKLPEMDID).

This sequence belongs to the heat shock protein 70 family. Interacts with TJP1/ZO-1. As to expression, ubiquitous. Highly expressed in testis.

The protein resides in the cytoplasm. The polypeptide is Heat shock 70 kDa protein 4 (Hspa4) (Rattus norvegicus (Rat)).